The primary structure comprises 85 residues: uncharacterized protein (85 aa).

A coiled-coil region spans residues lysine 17–alanine 53.

This is an uncharacterized protein from Archaeoglobus fulgidus (strain ATCC 49558 / DSM 4304 / JCM 9628 / NBRC 100126 / VC-16).